Consider the following 443-residue polypeptide: Serine--tRNA ligase (443 aa).

Position 246–248 (246–248 (TAE)) interacts with L-serine. 277 to 279 (RAE) contacts ATP. L-serine is bound at residue E300. Position 367–370 (367–370 (EISS)) interacts with ATP. Position 402 (S402) interacts with L-serine.

The protein belongs to the class-II aminoacyl-tRNA synthetase family. Type-1 seryl-tRNA synthetase subfamily. Homodimer. The tRNA molecule binds across the dimer.

It is found in the cytoplasm. It carries out the reaction tRNA(Ser) + L-serine + ATP = L-seryl-tRNA(Ser) + AMP + diphosphate + H(+). The catalysed reaction is tRNA(Sec) + L-serine + ATP = L-seryl-tRNA(Sec) + AMP + diphosphate + H(+). Its pathway is aminoacyl-tRNA biosynthesis; selenocysteinyl-tRNA(Sec) biosynthesis; L-seryl-tRNA(Sec) from L-serine and tRNA(Sec): step 1/1. Its function is as follows. Catalyzes the attachment of serine to tRNA(Ser). Is also able to aminoacylate tRNA(Sec) with serine, to form the misacylated tRNA L-seryl-tRNA(Sec), which will be further converted into selenocysteinyl-tRNA(Sec). This Bradyrhizobium diazoefficiens (strain JCM 10833 / BCRC 13528 / IAM 13628 / NBRC 14792 / USDA 110) protein is Serine--tRNA ligase.